The primary structure comprises 283 residues: Glutamate racemase (283 aa).

Substrate contacts are provided by residues 7 to 8 (DS) and 39 to 40 (YG). Residue C70 is the Proton donor/acceptor of the active site. 71–72 (NT) contributes to the substrate binding site. The active-site Proton donor/acceptor is C206. Position 207–208 (207–208 (TH)) interacts with substrate.

The protein belongs to the aspartate/glutamate racemases family.

It carries out the reaction L-glutamate = D-glutamate. Its pathway is cell wall biogenesis; peptidoglycan biosynthesis. Functionally, provides the (R)-glutamate required for cell wall biosynthesis. The protein is Glutamate racemase of Caulobacter sp. (strain K31).